We begin with the raw amino-acid sequence, 187 residues long: Elongation factor P (187 aa).

The protein belongs to the elongation factor P family.

The protein resides in the cytoplasm. It participates in protein biosynthesis; polypeptide chain elongation. Involved in peptide bond synthesis. Stimulates efficient translation and peptide-bond synthesis on native or reconstituted 70S ribosomes in vitro. Probably functions indirectly by altering the affinity of the ribosome for aminoacyl-tRNA, thus increasing their reactivity as acceptors for peptidyl transferase. This Treponema denticola (strain ATCC 35405 / DSM 14222 / CIP 103919 / JCM 8153 / KCTC 15104) protein is Elongation factor P.